A 183-amino-acid chain; its full sequence is Seminal plasma protein BSP-30 kDa (183 aa).

The signal sequence occupies residues Met-1–Gly-25. The segment at Val-23–Glu-47 is disordered. O-linked (GalNAc...) threonine glycans are attached at residues Thr-36, Thr-46, Thr-57, Thr-58, Thr-59, and Thr-64. Fibronectin type-II domains follow at residues Phe-92–Glu-136 and Arg-137–Cys-183. Disulfide bonds link Cys-97/Cys-121, Cys-111/Cys-134, Cys-142/Cys-168, and Cys-156/Cys-183.

It belongs to the seminal plasma protein family.

Its subcellular location is the secreted. In terms of biological role, binds to spermatozoa upon ejaculation and may play a role in sperm capacitation. Displays heparin-, gelatin- and phospholipid-binding activities. The chain is Seminal plasma protein BSP-30 kDa from Bos taurus (Bovine).